A 737-amino-acid polypeptide reads, in one-letter code: Dipeptidyl peptidase 3 (737 aa).

Position 2 is an N-acetylalanine (Ala-2). His-450 provides a ligand contact to Zn(2+). Glu-451 is a catalytic residue. Residues His-455 and Glu-508 each contribute to the Zn(2+) site.

This sequence belongs to the peptidase M49 family. It depends on Zn(2+) as a cofactor. As to expression, detected in placenta (at protein level). Detected in erythrocytes (at protein level).

It localises to the cytoplasm. The protein resides in the cytosol. The catalysed reaction is Release of an N-terminal dipeptide from a peptide comprising four or more residues, with broad specificity. Also acts on dipeptidyl 2-naphthylamides.. Activated by Co(2+). Inhibited by EDTA and o-phenanthroline (in vitro). Functionally, cleaves and degrades bioactive peptides, including angiotensin, Leu-enkephalin and Met-enkephalin. Also cleaves Arg-Arg-beta-naphthylamide (in vitro). The protein is Dipeptidyl peptidase 3 (DPP3) of Homo sapiens (Human).